Consider the following 309-residue polypeptide: Acetolactate synthase small subunit, mitochondrial (309 aa).

The N-terminal 24 residues, 1-24 (MLRSLLQSGHRRVVASSCATMVRC), are a transit peptide targeting the mitochondrion. The ACT domain maps to 79–159 (VLNCLVQNEP…DYTNSEIIKR (81 aa)).

It belongs to the acetolactate synthase small subunit family. As to quaternary structure, the acetolactate synthase complex contains the catalytic regulatory subunit ILV2 and the regulatory small subunit ILV6.

Its subcellular location is the mitochondrion. Its pathway is amino-acid biosynthesis; L-isoleucine biosynthesis; L-isoleucine from 2-oxobutanoate: step 1/4. It participates in amino-acid biosynthesis; L-valine biosynthesis; L-valine from pyruvate: step 1/4. Its function is as follows. Regulatory subunit of mitochondrial acetolactate synthase, which catalyzes the first of a series of common steps in the biosynthesis of the branched-chain amino acids. Stimulates activity of the acetolactate synthase catalytic subunit ILV2 seven- to tenfold and confers sensitivity to inhibition by valine and activation by ATP. The sequence is that of Acetolactate synthase small subunit, mitochondrial (ILV6) from Saccharomyces cerevisiae (strain ATCC 204508 / S288c) (Baker's yeast).